A 345-amino-acid polypeptide reads, in one-letter code: Phosphoribosylformylglycinamidine cyclo-ligase (345 aa).

Belongs to the AIR synthase family.

The protein localises to the cytoplasm. It catalyses the reaction 2-formamido-N(1)-(5-O-phospho-beta-D-ribosyl)acetamidine + ATP = 5-amino-1-(5-phospho-beta-D-ribosyl)imidazole + ADP + phosphate + H(+). It participates in purine metabolism; IMP biosynthesis via de novo pathway; 5-amino-1-(5-phospho-D-ribosyl)imidazole from N(2)-formyl-N(1)-(5-phospho-D-ribosyl)glycinamide: step 2/2. In Prochlorococcus marinus (strain MIT 9313), this protein is Phosphoribosylformylglycinamidine cyclo-ligase.